The following is a 639-amino-acid chain: Chaperone protein DnaK (639 aa).

A Phosphothreonine; by autocatalysis modification is found at Thr198. Residues 603–618 are compositionally biased toward low complexity; the sequence is AKAQTQGGAQEGAAKQ. Positions 603–639 are disordered; it reads AKAQTQGGAQEGAAKQSNATADDVVDAEFEEVKDDKK. Over residues 625-639 the composition is skewed to acidic residues; the sequence is DVVDAEFEEVKDDKK.

Belongs to the heat shock protein 70 family.

Acts as a chaperone. This Shewanella sp. (strain MR-7) protein is Chaperone protein DnaK.